A 481-amino-acid polypeptide reads, in one-letter code: Glutamate--tRNA ligase (481 aa).

A 'HIGH' region motif is present at residues 9–19 (PSPTGNLHIGT). A 'KMSKS' region motif is present at residues 247-251 (KLSKR). An ATP-binding site is contributed by Lys-250.

It belongs to the class-I aminoacyl-tRNA synthetase family. Glutamate--tRNA ligase type 1 subfamily. In terms of assembly, monomer.

It is found in the cytoplasm. It catalyses the reaction tRNA(Glu) + L-glutamate + ATP = L-glutamyl-tRNA(Glu) + AMP + diphosphate. Functionally, catalyzes the attachment of glutamate to tRNA(Glu) in a two-step reaction: glutamate is first activated by ATP to form Glu-AMP and then transferred to the acceptor end of tRNA(Glu). This chain is Glutamate--tRNA ligase, found in Trichormus variabilis (strain ATCC 29413 / PCC 7937) (Anabaena variabilis).